A 304-amino-acid chain; its full sequence is N-acetylmuramic acid 6-phosphate etherase (304 aa).

An SIS domain is found at 60-221 (GVSVLRHGGR…STAVMVRLGY (162 aa)). Catalysis depends on Glu-88, which acts as the Proton donor. The active site involves Glu-119.

Belongs to the GCKR-like family. MurNAc-6-P etherase subfamily. As to quaternary structure, homodimer.

It carries out the reaction N-acetyl-D-muramate 6-phosphate + H2O = N-acetyl-D-glucosamine 6-phosphate + (R)-lactate. The protein operates within amino-sugar metabolism; N-acetylmuramate degradation. Functionally, specifically catalyzes the cleavage of the D-lactyl ether substituent of MurNAc 6-phosphate, producing GlcNAc 6-phosphate and D-lactate. The sequence is that of N-acetylmuramic acid 6-phosphate etherase from Thermobifida fusca (strain YX).